Consider the following 858-residue polypeptide: Ubiquitin carboxyl-terminal hydrolase 5 (858 aa).

Ala2 carries the N-acetylalanine modification. Positions 74 to 96 (RRTRRPKEEDPTTGTGDPPRKKP) are disordered. A Glycyl lysine isopeptide (Lys-Gly) (interchain with G-Cter in SUMO) cross-link involves residue Lys113. Phosphoserine is present on residues Ser149 and Ser156. The UBP-type; degenerate zinc-finger motif lies at 175–283 (QVSKHAFSLK…EHLSHFGIDM (109 aa)). Residues Cys195 and Cys816 are joined by a disulfide bond. Residues Cys199 and Cys202 each contribute to the Zn(2+) site. Residue Trp209 participates in substrate binding. A Zn(2+)-binding site is contributed by Cys219. Residue 221–224 (RRYF) coordinates substrate. His232 is a Zn(2+) binding site. Substrate is bound by residues Tyr259, Tyr261, and Asp264. Thr292 is subject to Phosphothreonine. The region spanning 326-856 (TGIRNLGNSC…LGYIYFYQRV (531 aa)) is the USP domain. Cys335 acts as the Nucleophile in catalysis. Thr623 bears the Phosphothreonine mark. UBA domains follow at residues 654 to 695 (MLDE…VMSH) and 722 to 762 (PPPE…IFSH). 3 positions are modified to phosphoserine: Ser779, Ser783, and Ser785. His818 acts as the Proton acceptor in catalysis.

The protein belongs to the peptidase C19 family. In terms of assembly, homodimer. Interacts with TRIML1. Ubiquitinated by SMURF1; leading to proteasomal degradation. In terms of processing, SUMOylated at Lys-113; SUMOylation affects the interaction with Cav3.2 channels.

The protein localises to the cytoplasm. Its subcellular location is the stress granule. It is found in the nucleus. The enzyme catalyses Thiol-dependent hydrolysis of ester, thioester, amide, peptide and isopeptide bonds formed by the C-terminal Gly of ubiquitin (a 76-residue protein attached to proteins as an intracellular targeting signal).. Functionally, deubiquitinating enzyme that participates in a wide range of cellular processes by specifically cleaving isopeptide bonds between ubiquitin and substrate proteins or ubiquitin itself. Affects thereby important cellular signaling pathways such as NF-kappa-B, Wnt/beta-catenin, and cytokine production by regulating ubiquitin-dependent protein degradation. Participates in the activation of the Wnt signaling pathway by promoting FOXM1 deubiquitination and stabilization that induces the recruitment of beta-catenin to Wnt target gene promoter. Regulates the assembly and disassembly of heat-induced stress granules by mediating the hydrolysis of unanchored ubiquitin chains. Promotes lipopolysaccharide-induced apoptosis and inflammatory response by stabilizing the TXNIP protein. Affects T-cell biology by stabilizing the inhibitory receptor on T-cells PDC1. Acts as a negative regulator of autophagy by regulating ULK1 at both protein and mRNA levels. Acts also as a negative regulator of type I interferon production by simultaneously removing both 'Lys-48'-linked unanchored and 'Lys-63'-linked anchored polyubiquitin chains on the transcription factor IRF3. Modulates the stability of DNA mismatch repair protein MLH1 and counteracts the effect of the ubiquitin ligase UBR4. Upon activation by insulin, it gets phosphorylated through mTORC1-mediated phosphorylation to enhance YTHDF1 stability by removing 'Lys-11'-linked polyubiquitination. May also deubiquitinate other substrates such as the calcium channel CACNA1H. The chain is Ubiquitin carboxyl-terminal hydrolase 5 (UBP5) from Pongo abelii (Sumatran orangutan).